The primary structure comprises 274 residues: N-acetylmuramic acid 6-phosphate etherase (274 aa).

One can recognise an SIS domain in the interval 54–217; it reads IIPRIDSGGR…STSVMIKLGR (164 aa). Glutamate 82 functions as the Proton donor in the catalytic mechanism. Glutamate 113 is a catalytic residue.

It belongs to the GCKR-like family. MurNAc-6-P etherase subfamily. In terms of assembly, homodimer.

It catalyses the reaction N-acetyl-D-muramate 6-phosphate + H2O = N-acetyl-D-glucosamine 6-phosphate + (R)-lactate. Its pathway is amino-sugar metabolism; N-acetylmuramate degradation. Functionally, specifically catalyzes the cleavage of the D-lactyl ether substituent of MurNAc 6-phosphate, producing GlcNAc 6-phosphate and D-lactate. The polypeptide is N-acetylmuramic acid 6-phosphate etherase (Christiangramia forsetii (strain DSM 17595 / CGMCC 1.15422 / KT0803) (Gramella forsetii)).